An 83-amino-acid polypeptide reads, in one-letter code: RNA-binding protein Hfq (83 aa).

Residues 11–71 (DTFLNFVRKN…ISTIMPGQPI (61 aa)) enclose the Sm domain.

The protein belongs to the Hfq family. As to quaternary structure, homohexamer.

Its function is as follows. RNA chaperone that binds small regulatory RNA (sRNAs) and mRNAs to facilitate mRNA translational regulation in response to envelope stress, environmental stress and changes in metabolite concentrations. Also binds with high specificity to tRNAs. The polypeptide is RNA-binding protein Hfq (Methylocella silvestris (strain DSM 15510 / CIP 108128 / LMG 27833 / NCIMB 13906 / BL2)).